A 430-amino-acid polypeptide reads, in one-letter code: Sorting nexin-4 (430 aa).

The span at 1–18 (MDSASADASVTGSGNAKG) shows a compositional bias: polar residues. Residues 1 to 22 (MDSASADASVTGSGNAKGSSAE) are disordered. A PX domain is found at 33–162 (LEILVSDPQK…IFLVGNEWDT (130 aa)). 3 residues coordinate a 1,2-diacyl-sn-glycero-3-phospho-(1D-myo-inositol-3-phosphate): R83, K109, and R128. A coiled-coil region spans residues 351-414 (ASRRDKINKL…NNLADENIKF (64 aa)).

It belongs to the sorting nexin family.

Its subcellular location is the cytoplasm. The protein localises to the cytosol. The protein resides in the preautophagosomal structure membrane. It is found in the endosome membrane. Sorting nexin, involved in the separation or division of vacuoles throughout the entire life cycle of the cells. Involved in retrieval of late-Golgi SNAREs from post-Golgi endosomes to the trans-Golgi network, for cytoplasm to vacuole transport (Cvt), and autophagy of large cargos including mitophagy, pexophagy and glycophagy. The sequence is that of Sorting nexin-4 (SNX4) from Candida glabrata (strain ATCC 2001 / BCRC 20586 / JCM 3761 / NBRC 0622 / NRRL Y-65 / CBS 138) (Yeast).